The primary structure comprises 160 residues: UPF0178 protein BB1267 (160 aa).

This sequence belongs to the UPF0178 family.

The sequence is that of UPF0178 protein BB1267 from Bordetella bronchiseptica (strain ATCC BAA-588 / NCTC 13252 / RB50) (Alcaligenes bronchisepticus).